The primary structure comprises 365 residues: Histidinol-phosphate aminotransferase (365 aa).

K223 carries the N6-(pyridoxal phosphate)lysine modification.

The protein belongs to the class-II pyridoxal-phosphate-dependent aminotransferase family. Histidinol-phosphate aminotransferase subfamily. In terms of assembly, homodimer. Pyridoxal 5'-phosphate is required as a cofactor.

It catalyses the reaction L-histidinol phosphate + 2-oxoglutarate = 3-(imidazol-4-yl)-2-oxopropyl phosphate + L-glutamate. It functions in the pathway amino-acid biosynthesis; L-histidine biosynthesis; L-histidine from 5-phospho-alpha-D-ribose 1-diphosphate: step 7/9. The chain is Histidinol-phosphate aminotransferase from Brucella melitensis biotype 1 (strain ATCC 23456 / CCUG 17765 / NCTC 10094 / 16M).